A 631-amino-acid chain; its full sequence is uncharacterized protein (631 aa).

Polar residues predominate over residues 1 to 19 (MSKMGSSSMGELQDGITQE). The tract at residues 1–92 (MSKMGSSSMG…EENYPRLQTT (92 aa)) is disordered. Over residues 67–76 (KKKKKKKLKK) the composition is skewed to basic residues. Residues 277–426 (LAIDCEMVRT…EDALACVDLL (150 aa)) enclose the Exonuclease domain. Residues 517 to 526 (ANRNTKQENN) show a composition bias toward polar residues. Residues 517–540 (ANRNTKQENNSDTDTENDSVEEDQ) form a disordered region. Over residues 527–540 (SDTDTENDSVEEDQ) the composition is skewed to acidic residues.

Belongs to the REXO1/REXO3 family.

The protein localises to the nucleus. This is an uncharacterized protein from Schizosaccharomyces pombe (strain 972 / ATCC 24843) (Fission yeast).